Reading from the N-terminus, the 518-residue chain is Retinal dehydrogenase 2 (518 aa).

Tyrosine 168 carries the post-translational modification Phosphotyrosine. NAD(+) contacts are provided by residues 184 to 186 (IPW), 210 to 213 (KPAE), and 264 to 266 (STE). Glutamate 286 serves as the catalytic Proton acceptor. Cysteine 320 acts as the Nucleophile in catalysis. Serine 351 carries the phosphoserine modification. NAD(+) is bound by residues 366-370 (KQYNK) and glutamate 417.

The protein belongs to the aldehyde dehydrogenase family. Homotetramer.

The protein resides in the cytoplasm. It catalyses the reaction retinal + NAD(+) + H2O = retinoate + NADH + 2 H(+). It carries out the reaction all-trans-retinal + NAD(+) + H2O = all-trans-retinoate + NADH + 2 H(+). The catalysed reaction is all-trans-13,14-dihydroretinal + NAD(+) + H2O = all-trans-13,14-dihydroretinoate + NADH + 2 H(+). It functions in the pathway cofactor metabolism; retinol metabolism. Functionally, catalyzes the NAD-dependent oxidation of aldehyde substrates, such as all-trans-retinal and all-trans-13,14-dihydroretinal, to their corresponding carboxylic acids, all-trans-retinoate and all-trans-13,14-dihydroretinoate, respectively. Retinoate signaling is critical for the transcriptional control of many genes, for instance it is crucial for initiation of meiosis in both male and female. Recognizes retinal as substrate, both in its free form and when bound to cellular retinol-binding protein. Can metabolize octanal and decanal, but has only very low activity with benzaldehyde, acetaldehyde and propanal. Displays complete lack of activity with citral. This Homo sapiens (Human) protein is Retinal dehydrogenase 2 (ALDH1A2).